The following is a 396-amino-acid chain: Cathepsin E (396 aa).

The signal sequence occupies residues 1–19; sequence MKTLPLLLLLLLDLGQAQG. The propeptide at 20–53 is activation peptide; it reads TLDRVPLRRQPSLRKKLRAQGQLSEFWKAHKVDM. The Peptidase A1 domain occupies 78 to 392; that stretch reads YFGTISIGSP…DRGSNRVGLA (315 aa). N-linked (GlcNAc...) asparagine glycosylation occurs at asparagine 90. Aspartate 96 is a catalytic residue. 2 disulfide bridges follow: cysteine 109–cysteine 114 and cysteine 272–cysteine 276. Aspartate 281 is an active-site residue. The cysteines at positions 314 and 351 are disulfide-linked.

Belongs to the peptidase A1 family. In terms of assembly, homodimer; disulfide-linked. In terms of processing, glycosylated. The nature of the carbohydrate chain varies between cell types.

It is found in the endosome. It carries out the reaction Similar to cathepsin D, but slightly broader specificity.. Functionally, may have a role in immune function. Probably involved in the processing of antigenic peptides during MHC class II-mediated antigen presentation. May play a role in activation-induced lymphocyte depletion in the thymus, and in neuronal degeneration and glial cell activation in the brain. The protein is Cathepsin E (CTSE) of Oryctolagus cuniculus (Rabbit).